The primary structure comprises 180 residues: MSRIGRLPIKIPDTVKIDVKGNLVIVEGTRGKLVQDIKDSINVKVENGSVIVNRAFNDKKTKAYHGLYRSLIFNMVKGVTEGFSKSLTINGIGYRVEQQGNSLFLNLGYSTQFEYVVPDGVSVKLDGNTKISVEGIDKFKVGQVAAEIRSLKKPEPYKGKGIKYDNEVIRRKVGKSGVKK.

Belongs to the universal ribosomal protein uL6 family. Part of the 50S ribosomal subunit.

In terms of biological role, this protein binds to the 23S rRNA, and is important in its secondary structure. It is located near the subunit interface in the base of the L7/L12 stalk, and near the tRNA binding site of the peptidyltransferase center. This is Large ribosomal subunit protein uL6 from Borrelia garinii subsp. bavariensis (strain ATCC BAA-2496 / DSM 23469 / PBi) (Borreliella bavariensis).